We begin with the raw amino-acid sequence, 369 residues long: Maltose/maltodextrin import ATP-binding protein MalK (369 aa).

The ABC transporter domain maps to 4–234 (VTLSSVYKAF…PANRFVAGFI (231 aa)). 36-43 (GPSGCGKS) provides a ligand contact to ATP.

This sequence belongs to the ABC transporter superfamily. Maltooligosaccharide importer (TC 3.A.1.1.1) family. The complex is composed of two ATP-binding proteins (MalK), two transmembrane proteins (MalG and MalK) and a solute-binding protein (MalE).

Its subcellular location is the cell inner membrane. The catalysed reaction is D-maltose(out) + ATP + H2O = D-maltose(in) + ADP + phosphate + H(+). Part of the ABC transporter complex MalEFGK involved in maltose/maltodextrin import. Responsible for energy coupling to the transport system. The chain is Maltose/maltodextrin import ATP-binding protein MalK from Yersinia pestis bv. Antiqua (strain Antiqua).